The chain runs to 208 residues: Cytochrome c biogenesis ATP-binding export protein CcmA (208 aa).

The ABC transporter domain maps to Leu3 to Arg206. An ATP-binding site is contributed by Gly35–Ser42.

The protein belongs to the ABC transporter superfamily. CcmA exporter (TC 3.A.1.107) family. In terms of assembly, the complex is composed of two ATP-binding proteins (CcmA) and two transmembrane proteins (CcmB).

It is found in the cell inner membrane. It carries out the reaction heme b(in) + ATP + H2O = heme b(out) + ADP + phosphate + H(+). Its function is as follows. Part of the ABC transporter complex CcmAB involved in the biogenesis of c-type cytochromes; once thought to export heme, this seems not to be the case, but its exact role is uncertain. Responsible for energy coupling to the transport system. The protein is Cytochrome c biogenesis ATP-binding export protein CcmA of Bartonella quintana (strain Toulouse) (Rochalimaea quintana).